The chain runs to 378 residues: Histidinol-phosphate aminotransferase (378 aa).

Residues 1-20 (MSVSAKETQRHPARPEPRPG) are disordered. Basic and acidic residues predominate over residues 7–17 (ETQRHPARPEP). Lys232 bears the N6-(pyridoxal phosphate)lysine mark.

This sequence belongs to the class-II pyridoxal-phosphate-dependent aminotransferase family. Histidinol-phosphate aminotransferase subfamily. As to quaternary structure, homodimer. Pyridoxal 5'-phosphate is required as a cofactor.

It catalyses the reaction L-histidinol phosphate + 2-oxoglutarate = 3-(imidazol-4-yl)-2-oxopropyl phosphate + L-glutamate. It functions in the pathway amino-acid biosynthesis; L-histidine biosynthesis; L-histidine from 5-phospho-alpha-D-ribose 1-diphosphate: step 7/9. The chain is Histidinol-phosphate aminotransferase from Azorhizobium caulinodans (strain ATCC 43989 / DSM 5975 / JCM 20966 / LMG 6465 / NBRC 14845 / NCIMB 13405 / ORS 571).